Consider the following 433-residue polypeptide: Serine--tRNA ligase (433 aa).

235–237 (TSE) lines the L-serine pocket. 266–268 (RSE) provides a ligand contact to ATP. Residue E289 coordinates L-serine. Residue 353-356 (EISS) coordinates ATP. S388 is an L-serine binding site.

It belongs to the class-II aminoacyl-tRNA synthetase family. Type-1 seryl-tRNA synthetase subfamily. Homodimer. The tRNA molecule binds across the dimer.

It localises to the cytoplasm. The catalysed reaction is tRNA(Ser) + L-serine + ATP = L-seryl-tRNA(Ser) + AMP + diphosphate + H(+). It catalyses the reaction tRNA(Sec) + L-serine + ATP = L-seryl-tRNA(Sec) + AMP + diphosphate + H(+). The protein operates within aminoacyl-tRNA biosynthesis; selenocysteinyl-tRNA(Sec) biosynthesis; L-seryl-tRNA(Sec) from L-serine and tRNA(Sec): step 1/1. Functionally, catalyzes the attachment of serine to tRNA(Ser). Is also able to aminoacylate tRNA(Sec) with serine, to form the misacylated tRNA L-seryl-tRNA(Sec), which will be further converted into selenocysteinyl-tRNA(Sec). The sequence is that of Serine--tRNA ligase from Burkholderia vietnamiensis (strain G4 / LMG 22486) (Burkholderia cepacia (strain R1808)).